The following is a 252-amino-acid chain: 5'-nucleotidase SurE (252 aa).

Residues Asp-8, Asp-9, Ser-39, and Asn-95 each coordinate a divalent metal cation.

This sequence belongs to the SurE nucleotidase family. The cofactor is a divalent metal cation.

Its subcellular location is the cytoplasm. The enzyme catalyses a ribonucleoside 5'-phosphate + H2O = a ribonucleoside + phosphate. Its function is as follows. Nucleotidase that shows phosphatase activity on nucleoside 5'-monophosphates. The protein is 5'-nucleotidase SurE of Clostridium botulinum (strain ATCC 19397 / Type A).